A 409-amino-acid polypeptide reads, in one-letter code: Ingression protein 1 (409 aa).

In terms of domain architecture, C2 spans 1-114 (MSEEVWNGNQ…DPKEGYCTWY (114 aa)). Positions 300–409 (LSYDEDDDDD…TRKRPPPRLS (110 aa)) are disordered. The segment covering 302–313 (YDEDDDDDDEND) has biased composition (acidic residues). Positions 315-328 (FYSSSHRVSHNYNQ) are enriched in polar residues. A compositionally biased stretch (low complexity) spans 360 to 377 (LDSSSPNSHPHPSGLNSP). Residues 384–399 (TTSNSNFNSRKNSMSP) show a composition bias toward polar residues. A Phosphoserine modification is found at serine 392. Residues 400–409 (TRKRPPPRLS) are compositionally biased toward basic residues.

The protein belongs to the INN1/fic1 family. In terms of assembly, interacts with CYK2, CYK3 and IQG1.

It localises to the bud neck. Functionally, required for the ingression of the plasma membrane into the bud neck at the end of cytokinesis, leading to the separation of the mother and daughter cells. Stimulates the synthesis of the primary septum (PS) by CHS2. The polypeptide is Ingression protein 1 (INN1) (Saccharomyces cerevisiae (strain ATCC 204508 / S288c) (Baker's yeast)).